The following is a 180-amino-acid chain: UPF0227 protein VV2369 (180 aa).

It belongs to the UPF0227 family.

The sequence is that of UPF0227 protein VV2369 from Vibrio vulnificus (strain YJ016).